A 163-amino-acid chain; its full sequence is uncharacterized protein (163 aa).

Over residues 1 to 10 (MTHPLPHDSH) the composition is skewed to basic and acidic residues. Disordered stretches follow at residues 1 to 21 (MTHP…VNKS) and 71 to 112 (SKQP…EQRR). Residues 90 to 105 (PASSLQDHSRLTSLSR) are compositionally biased toward polar residues.

This is an uncharacterized protein from Homo sapiens (Human).